We begin with the raw amino-acid sequence, 245 residues long: U21-ctenitoxin-Pn1a (245 aa).

Residues 1 to 245 (IVYGTVTTPG…FRSWMDKVMT (245 aa)) enclose the Peptidase S1 domain. Cys30 and Cys46 are oxidised to a cystine. Active-site charge relay system residues include His45 and Asp95. Disulfide bonds link Cys161–Cys183 and Cys192–Cys221. The Charge relay system role is filled by Ser196.

Expressed by the venom gland.

The protein resides in the secreted. Functionally, protease. Hydrolyzes gelatin and succinyl casein. In Phoneutria nigriventer (Brazilian armed spider), this protein is U21-ctenitoxin-Pn1a.